Reading from the N-terminus, the 118-residue chain is uncharacterized protein (118 aa).

This sequence to M.jannaschii MJ0310 and MJ1340.

This is an uncharacterized protein from Methanocaldococcus jannaschii (strain ATCC 43067 / DSM 2661 / JAL-1 / JCM 10045 / NBRC 100440) (Methanococcus jannaschii).